Consider the following 363-residue polypeptide: Nucleoporin SEH1 (363 aa).

WD repeat units lie at residues A15 to R54, C60 to D101, Q108 to E149, R158 to E206, D223 to L264, and G287 to K326.

Belongs to the WD repeat SEC13 family. As to quaternary structure, component of the nuclear pore complex (NPC). Probably part of the GATOR complex.

It localises to the nucleus. Its subcellular location is the nuclear pore complex. The protein resides in the lysosome membrane. The protein localises to the nucleus envelope. Its function is as follows. Probable component of the nuclear pore complex (NPC) which is involved in the trafficking of macromolecules between the cytoplasm and nucleus. As a component of the GATOR complex may function in the amino acid-sensing branch of the TORC1 signaling pathway. This is Nucleoporin SEH1 from Caenorhabditis elegans.